Here is a 367-residue protein sequence, read N- to C-terminus: Dihydroorotate dehydrogenase (quinone) (367 aa).

FMN is bound by residues Ala61–Lys65 and Thr85. Lys65 contributes to the substrate binding site. Asn110 to Phe114 provides a ligand contact to substrate. Positions 138 and 169 each coordinate FMN. Residue Asn169 participates in substrate binding. The Nucleophile role is filled by Ser172. Asn174 provides a ligand contact to substrate. Residues Lys212 and Thr240 each coordinate FMN. Asn241–Thr242 is a binding site for substrate. FMN is bound by residues Gly263, Gly292, and Tyr313–Ser314.

The protein belongs to the dihydroorotate dehydrogenase family. Type 2 subfamily. In terms of assembly, monomer. FMN serves as cofactor.

The protein resides in the cell membrane. The catalysed reaction is (S)-dihydroorotate + a quinone = orotate + a quinol. It functions in the pathway pyrimidine metabolism; UMP biosynthesis via de novo pathway; orotate from (S)-dihydroorotate (quinone route): step 1/1. In terms of biological role, catalyzes the conversion of dihydroorotate to orotate with quinone as electron acceptor. The sequence is that of Dihydroorotate dehydrogenase (quinone) from Rhodospirillum rubrum (strain ATCC 11170 / ATH 1.1.1 / DSM 467 / LMG 4362 / NCIMB 8255 / S1).